Here is a 181-residue protein sequence, read N- to C-terminus: Ribonuclease HII (181 aa).

The region spanning 1-181 (MICGIDEVGR…NLHRRSFKFI (181 aa)) is the RNase H type-2 domain. Residues D6, E7, and D98 each contribute to the a divalent metal cation site.

It belongs to the RNase HII family. The cofactor is Mn(2+). Mg(2+) is required as a cofactor.

Its subcellular location is the cytoplasm. The enzyme catalyses Endonucleolytic cleavage to 5'-phosphomonoester.. Functionally, endonuclease that specifically degrades the RNA of RNA-DNA hybrids. This chain is Ribonuclease HII, found in Borrelia hermsii (strain HS1 / DAH).